Consider the following 448-residue polypeptide: MKHRYLPQTEQDQKEMLDVIGVQSIDELFSDIPEKVRFKGAYNIKPAASETELVRELSQLAAKNKDTVSYASFLGAGVYDHYQPVIVDHVISRSEFYTAYTPYQPEISQGELQAIFEFQTMIAELTGMDLANSSMYDGGTALAEAAMLAAGHTKKKKVVVSETVHPEARAVLKTYAKGQHIEVVEVPAKKGQTDLAALEKAVCDETAAVLVQYPNFFGVVEPLKDIEPIAHKGKSLFVVSSNPLALGLLTPPGKLGADIVVGDAQPFGIPAAFGGPHCGYFAVTKKLMRKVPGRLVGQTEDENGVRGFVLTLQAREQHIRRDKATSNICSNQALNALAASVAMTALGKTGIKDIAYQNVQKAHYAKTQAETYGLLADVEGTHFNEFVIKLQEPVQEVNKRLLEKGIIGGYDLGRDYPELQHHMLVAVTELRTKEEIDTFIKELGDRHE.

Belongs to the GcvP family. N-terminal subunit subfamily. As to quaternary structure, the glycine cleavage system is composed of four proteins: P, T, L and H. In this organism, the P 'protein' is a heterodimer of two subunits.

It catalyses the reaction N(6)-[(R)-lipoyl]-L-lysyl-[glycine-cleavage complex H protein] + glycine + H(+) = N(6)-[(R)-S(8)-aminomethyldihydrolipoyl]-L-lysyl-[glycine-cleavage complex H protein] + CO2. In terms of biological role, the glycine cleavage system catalyzes the degradation of glycine. The P protein binds the alpha-amino group of glycine through its pyridoxal phosphate cofactor; CO(2) is released and the remaining methylamine moiety is then transferred to the lipoamide cofactor of the H protein. The protein is Probable glycine dehydrogenase (decarboxylating) subunit 1 of Bacillus pumilus (strain SAFR-032).